Here is a 91-residue protein sequence, read N- to C-terminus: Large ribosomal subunit protein bL27 (91 aa).

Over residues 1–13 (MATKKSGGSSCNG) the composition is skewed to polar residues. A disordered region spans residues 1–20 (MATKKSGGSSCNGRDSRGRR).

The protein belongs to the bacterial ribosomal protein bL27 family.

This chain is Large ribosomal subunit protein bL27, found in Anaplasma phagocytophilum (strain HZ).